A 229-amino-acid polypeptide reads, in one-letter code: Large ribosomal subunit protein uL1 (229 aa).

It belongs to the universal ribosomal protein uL1 family. As to quaternary structure, part of the 50S ribosomal subunit.

Its function is as follows. Binds directly to 23S rRNA. The L1 stalk is quite mobile in the ribosome, and is involved in E site tRNA release. Protein L1 is also a translational repressor protein, it controls the translation of the L11 operon by binding to its mRNA. This Listeria innocua serovar 6a (strain ATCC BAA-680 / CLIP 11262) protein is Large ribosomal subunit protein uL1.